The primary structure comprises 491 residues: Ketol-acid reductoisomerase (NADP(+)) (491 aa).

Positions 15–208 (AQLGKCRFMG…GGHRAGVLES (194 aa)) constitute a KARI N-terminal Rossmann domain. NADP(+) is bound by residues 45 to 48 (CGAQ), Arg-68, Arg-76, Ser-78, and 108 to 110 (DKQ). The active site involves His-132. Gly-158 is an NADP(+) binding site. KARI C-terminal knotted domains lie at 209–344 (SFVA…TAPQ) and 345–484 (YEGK…MTDM). The Mg(2+) site is built by Asp-217, Glu-221, Glu-389, and Glu-393. Ser-414 contributes to the substrate binding site.

This sequence belongs to the ketol-acid reductoisomerase family. Requires Mg(2+) as cofactor.

It catalyses the reaction (2R)-2,3-dihydroxy-3-methylbutanoate + NADP(+) = (2S)-2-acetolactate + NADPH + H(+). The catalysed reaction is (2R,3R)-2,3-dihydroxy-3-methylpentanoate + NADP(+) = (S)-2-ethyl-2-hydroxy-3-oxobutanoate + NADPH + H(+). It functions in the pathway amino-acid biosynthesis; L-isoleucine biosynthesis; L-isoleucine from 2-oxobutanoate: step 2/4. Its pathway is amino-acid biosynthesis; L-valine biosynthesis; L-valine from pyruvate: step 2/4. In terms of biological role, involved in the biosynthesis of branched-chain amino acids (BCAA). Catalyzes an alkyl-migration followed by a ketol-acid reduction of (S)-2-acetolactate (S2AL) to yield (R)-2,3-dihydroxy-isovalerate. In the isomerase reaction, S2AL is rearranged via a Mg-dependent methyl migration to produce 3-hydroxy-3-methyl-2-ketobutyrate (HMKB). In the reductase reaction, this 2-ketoacid undergoes a metal-dependent reduction by NADPH to yield (R)-2,3-dihydroxy-isovalerate. The chain is Ketol-acid reductoisomerase (NADP(+)) from Escherichia coli O6:K15:H31 (strain 536 / UPEC).